Consider the following 234-residue polypeptide: Ribose-5-phosphate isomerase A (234 aa).

Substrate contacts are provided by residues 39–42, 92–95, and 105–108; these read TGST, DGAD, and KGGG. The Proton acceptor role is filled by E114. Position 132 (K132) interacts with substrate.

Belongs to the ribose 5-phosphate isomerase family. In terms of assembly, homodimer.

The catalysed reaction is aldehydo-D-ribose 5-phosphate = D-ribulose 5-phosphate. The protein operates within carbohydrate degradation; pentose phosphate pathway; D-ribose 5-phosphate from D-ribulose 5-phosphate (non-oxidative stage): step 1/1. Its function is as follows. Catalyzes the reversible conversion of ribose-5-phosphate to ribulose 5-phosphate. The sequence is that of Ribose-5-phosphate isomerase A from Albidiferax ferrireducens (strain ATCC BAA-621 / DSM 15236 / T118) (Rhodoferax ferrireducens).